The chain runs to 310 residues: GPN-loop GTPase 2 (310 aa).

Residue Ala2 is modified to N-acetylalanine. 19 to 24 (GSGKTT) is a binding site for GTP. The Gly-Pro-Asn (GPN)-loop; involved in dimer interface signature appears at 76–78 (GPN). 178–181 (SKMD) contributes to the GTP binding site.

The protein belongs to the GPN-loop GTPase family. Heterodimers with GPN1 or GPN3. Binds to RNA polymerase II (RNAPII).

In terms of biological role, small GTPase required for proper localization of RNA polymerase II and III (RNAPII and RNAPIII). May act at an RNAP assembly step prior to nuclear import. This is GPN-loop GTPase 2 from Rattus norvegicus (Rat).